The primary structure comprises 240 residues: DNA repair protein RecO (240 aa).

It belongs to the RecO family.

Involved in DNA repair and RecF pathway recombination. The chain is DNA repair protein RecO from Wolbachia sp. subsp. Drosophila simulans (strain wRi).